The primary structure comprises 431 residues: Glutamyl-tRNA(Gln) amidotransferase subunit A (431 aa).

Residues lysine 55 and serine 130 each act as charge relay system in the active site. Serine 154 serves as the catalytic Acyl-ester intermediate.

This sequence belongs to the amidase family. GatA subfamily. As to quaternary structure, heterotrimer of A, B and C subunits.

The enzyme catalyses L-glutamyl-tRNA(Gln) + L-glutamine + ATP + H2O = L-glutaminyl-tRNA(Gln) + L-glutamate + ADP + phosphate + H(+). Allows the formation of correctly charged Gln-tRNA(Gln) through the transamidation of misacylated Glu-tRNA(Gln) in organisms which lack glutaminyl-tRNA synthetase. The reaction takes place in the presence of glutamine and ATP through an activated gamma-phospho-Glu-tRNA(Gln). This Methanococcus maripaludis (strain C5 / ATCC BAA-1333) protein is Glutamyl-tRNA(Gln) amidotransferase subunit A.